Consider the following 837-residue polypeptide: Vacuolar membrane protease (837 aa).

The Cytoplasmic segment spans residues 1 to 36 (MSEEEVHDTSSEASEVFTNQPNAFVRGVRSIFGYRK). Residues 37 to 57 (TSLTLFVILTIVVTAGLSFYD) form a helical membrane-spanning segment. The Vacuolar segment spans residues 58 to 355 (NSLELTIELP…FATPISALAR (298 aa)). The N-linked (GlcNAc...) asparagine glycan is linked to Asn143. Zn(2+) is bound by residues His157 and Asp169. Glu201 serves as the catalytic Proton acceptor. Glu202, Glu227, and His299 together coordinate Zn(2+). A helical membrane pass occupies residues 356–376 (VNLVLLVLFPVVSTPLLFVIV). Residues 377-384 (KYKKWKLR) lie on the Cytoplasmic side of the membrane. The helical transmembrane segment at 385 to 405 (VTNFLGVPLAMGLAVAVGQVG) threads the bilayer. Residues 406-415 (NPMLVSSHPM) lie on the Vacuolar side of the membrane. A helical membrane pass occupies residues 416-436 (MVVATTTSIVVLVYYVVLNGV). The Cytoplasmic portion of the chain corresponds to 437–446 (DWVNTSSDQK). A helical transmembrane segment spans residues 447-467 (LVTMIEVSFVYWVVLVYVTWS). At 468–474 (GGDHTGE) the chain is on the vacuolar side. A helical membrane pass occupies residues 475-495 (FGVTVLFFVQASTSLLGLIGW). Over 496 to 539 (TFTRVRGGDEPLLSGEEERYGTEDERDTEKPLVEHNYDWSLQYL) the chain is Cytoplasmic. Residues 540–560 (LIVPVSSLVVYNSGWLVLEGV) form a helical membrane-spanning segment. The N-linked (GlcNAc...) asparagine glycan is linked to Asn561. At 561–572 (NKTVQESLASEH) the chain is on the vacuolar side. The helical transmembrane segment at 573–593 (LIYWIVVVFSQFLVLPVVPFI) threads the bilayer. Topologically, residues 594 to 598 (TKFNR) are cytoplasmic. Residues 599–619 (YIVLGLSVVAVVGVLMSMAVH) form a helical membrane-spanning segment. Topologically, residues 620–837 (PFNQGSPMKL…LVGVVKHVDV (218 aa)) are vacuolar. Asn689 is a glycosylation site (N-linked (GlcNAc...) asparagine).

Belongs to the peptidase M28 family. Requires Zn(2+) as cofactor.

It is found in the vacuole membrane. May be involved in vacuolar sorting and osmoregulation. The protein is Vacuolar membrane protease of Candida albicans (strain WO-1) (Yeast).